Here is a 255-residue protein sequence, read N- to C-terminus: uncharacterized protein (255 aa).

The N-terminal stretch at Met1–Ala28 is a signal peptide. N-linked (GlcNAc...) asparagine glycans are attached at residues Asn38, Asn61, and Asn83.

Its subcellular location is the secreted. This is an uncharacterized protein from Dictyostelium discoideum (Social amoeba).